The primary structure comprises 525 residues: Bifunctional pantoate ligase/cytidylate kinase (525 aa).

Residues 1–292 (MDNVPIIRTV…VGSARLIDNM (292 aa)) form a pantoate--beta-alanine ligase region. 44–51 (MGALHAGH) provides a ligand contact to ATP. The Proton donor role is filled by H51. Residue Q75 participates in (R)-pantoate binding. Q75 contributes to the beta-alanine binding site. Residue 162-165 (GQKD) participates in ATP binding. Q168 lines the (R)-pantoate pocket. Residues I191 and 199–202 (LSSR) each bind ATP. Residues 293-525 (LLDARLPILA…LYQERFPDRA (233 aa)) form a cytidylate kinase region.

It in the N-terminal section; belongs to the pantothenate synthetase family. The protein in the C-terminal section; belongs to the cytidylate kinase family. Type 1 subfamily.

It is found in the cytoplasm. It catalyses the reaction (R)-pantoate + beta-alanine + ATP = (R)-pantothenate + AMP + diphosphate + H(+). The enzyme catalyses CMP + ATP = CDP + ADP. The catalysed reaction is dCMP + ATP = dCDP + ADP. The protein operates within cofactor biosynthesis; (R)-pantothenate biosynthesis; (R)-pantothenate from (R)-pantoate and beta-alanine: step 1/1. Catalyzes the condensation of pantoate with beta-alanine in an ATP-dependent reaction via a pantoyl-adenylate intermediate. Functionally, catalyzes the transfer of a phosphate group from ATP to either CMP or dCMP to form CDP or dCDP and ADP, respectively. The sequence is that of Bifunctional pantoate ligase/cytidylate kinase from Acaryochloris marina (strain MBIC 11017).